Reading from the N-terminus, the 623-residue chain is Heterogeneous nuclear ribonucleoprotein L (623 aa).

Residues 1–16 (MSRRLLPRAEKRRRRL) show a composition bias toward basic residues. Positions 1–97 (MSRRLLPRAE…NYDDPHKTPA (97 aa)) are disordered. The span at 17 to 27 (EQRQQPDEQLR) shows a compositional bias: basic and acidic residues. Over residues 28–37 (RAGAMVKMAA) the composition is skewed to low complexity. The span at 38 to 54 (AGGGGGGGRYYGGGNEG) shows a compositional bias: gly residues. Glycyl lysine isopeptide (Lys-Gly) (interchain with G-Cter in SUMO2) cross-links involve residues K59 and K62. Residues 69 to 87 (QHGGGGGGGSGAAGGGGGE) show a composition bias toward gly residues. S98 is subject to Phosphoserine. In terms of domain architecture, RRM 1 spans 99-173 (PVVHIRGLID…HPAFVNYSTS (75 aa)). K133 participates in a covalent cross-link: Glycyl lysine isopeptide (Lys-Gly) (interchain with G-Cter in SUMO2). S182 is subject to Phosphoserine. Residues 190–267 (SVLLFTILNP…CTLKIEYAKP (78 aa)) enclose the RRM 2 domain. At K266 the chain carries N6-acetyllysine. A compositionally biased stretch (polar residues) spans 281 to 298 (DYTNPNLSGQGDPGSNPN). Residues 281–413 (DYTNPNLSGQ…PPPPDYGPHA (133 aa)) form a disordered region. 2 positions are modified to phosphoserine: S288 and S295. K299 participates in a covalent cross-link: Glycyl lysine isopeptide (Lys-Gly) (interchain with G-Cter in SUMO2). 2 positions are modified to asymmetric dimethylarginine: R388 and R392. Residues 398-409 (GHPPPPPPPPDY) are compositionally biased toward pro residues. S415 carries the phosphoserine modification. RRM domains are found at residues 416-490 (PVLM…VSKQ) and 498-586 (SYGL…WDSK). A Phosphoserine; by CaMK4 modification is found at S578. A Glycyl lysine isopeptide (Lys-Gly) (interchain with G-Cter in SUMO2) cross-link involves residue K602.

In terms of assembly, identified in a IGF2BP1-dependent mRNP granule complex containing untranslated mRNAs. Interacts with HNRNPLL. Interacts with APEX1; the interaction is DNA-dependent. Component of a complex with SETD2. Interacts with ELAVL1. Part of a transcription inhibitory ribonucleoprotein complex composed at least of the circular RNA circZNF827, ZNF827 and HNRNPK. Interacts with CHD8 in an RNA-dependent manner. In terms of processing, several isoelectric forms of the L protein are probably the results of post-translational modifications. Phosphorylation at Ser-578 by CaMK4 enhances interaction with a CaMK4-responsive RNA element (CaRRE1), and prevents inclusion of the stress axis-regulated exon (STREX) of the KCNMA1 potassium channel transcripts upon membrane depolarization.

It is found in the nucleus. The protein resides in the nucleoplasm. The protein localises to the cytoplasm. Splicing factor binding to exonic or intronic sites and acting as either an activator or repressor of exon inclusion. Exhibits a binding preference for CA-rich elements. Component of the heterogeneous nuclear ribonucleoprotein (hnRNP) complexes and associated with most nascent transcripts. Associates, together with APEX1, to the negative calcium responsive element (nCaRE) B2 of the APEX2 promoter. As part of a ribonucleoprotein complex composed at least of ZNF827, HNRNPK and the circular RNA circZNF827 that nucleates the complex on chromatin, may negatively regulate the transcription of genes involved in neuronal differentiation. Regulates alternative splicing of a core group of genes involved in neuronal differentiation, likely by mediating H3K36me3-coupled transcription elongation and co-transcriptional RNA processing via interaction with CHD8. This Rattus norvegicus (Rat) protein is Heterogeneous nuclear ribonucleoprotein L.